We begin with the raw amino-acid sequence, 459 residues long: Cysteine--tRNA ligase (459 aa).

C28 serves as a coordination point for Zn(2+). A 'HIGH' region motif is present at residues 30–40 (ITIYDLCHIGH). Residues C209, H234, and E238 each coordinate Zn(2+). Positions 266 to 270 (KMSKS) match the 'KMSKS' region motif. Position 269 (K269) interacts with ATP.

The protein belongs to the class-I aminoacyl-tRNA synthetase family. In terms of assembly, monomer. The cofactor is Zn(2+).

Its subcellular location is the cytoplasm. The catalysed reaction is tRNA(Cys) + L-cysteine + ATP = L-cysteinyl-tRNA(Cys) + AMP + diphosphate. The sequence is that of Cysteine--tRNA ligase from Shewanella sediminis (strain HAW-EB3).